The following is a 277-amino-acid chain: 2,5-diketo-D-gluconic acid reductase B (277 aa).

Y51 acts as the Proton donor in catalysis. Residue H109 participates in substrate binding. 189-242 (SPLARRSELLTEQLLQELAVVYGVTPTQVVLRWHVQLGSTPIPKSADPDRQREN) is a binding site for NADP(+).

The protein belongs to the aldo/keto reductase family.

The protein resides in the cytoplasm. It carries out the reaction 2-dehydro-D-gluconate + NADP(+) = 2,5-didehydro-D-gluconate + NADPH + H(+). In terms of biological role, catalyzes the reduction of 2,5-diketo-D-gluconic acid (25DKG) to 2-keto-L-gulonic acid (2KLG). 25DKGR-B has higher catalytic efficiency than 25DKGR-A. This Corynebacterium sp. (strain SHS752001) protein is 2,5-diketo-D-gluconic acid reductase B (dkgB).